A 634-amino-acid polypeptide reads, in one-letter code: Chaperone protein HtpG (634 aa).

The segment at 1-342 (MTVETDKQTL…SSDLSLNVSR (342 aa)) is a; substrate-binding. Residues 343 to 559 (EILQSGPVVD…QGDLGLQMRQ (217 aa)) form a b region. The segment at 560–634 (LLEASGQAVP…LNKLLLELSV (75 aa)) is c.

This sequence belongs to the heat shock protein 90 family. Homodimer.

It is found in the cytoplasm. In terms of biological role, molecular chaperone. Has ATPase activity. This Xanthomonas euvesicatoria pv. vesicatoria (strain 85-10) (Xanthomonas campestris pv. vesicatoria) protein is Chaperone protein HtpG.